The following is a 263-amino-acid chain: uncharacterized protein (263 aa).

The 88-residue stretch at 44-131 folds into the GST N-terminal domain; that stretch reads QVYSLGTPNG…YLADKFNHLI (88 aa). The GST C-terminal domain maps to 134–263; that stretch reads DWAQRTEVLN…ALEVDYKAIK (130 aa).

It belongs to the GST superfamily. As to quaternary structure, homodimer.

This is an uncharacterized protein from Streptococcus mutans serotype c (strain ATCC 700610 / UA159).